Here is a 145-residue protein sequence, read N- to C-terminus: D-aminoacyl-tRNA deacylase (145 aa).

Residues 137-138 (GP) carry the Gly-cisPro motif, important for rejection of L-amino acids motif.

Belongs to the DTD family. In terms of assembly, homodimer.

The protein localises to the cytoplasm. It carries out the reaction glycyl-tRNA(Ala) + H2O = tRNA(Ala) + glycine + H(+). The enzyme catalyses a D-aminoacyl-tRNA + H2O = a tRNA + a D-alpha-amino acid + H(+). An aminoacyl-tRNA editing enzyme that deacylates mischarged D-aminoacyl-tRNAs. Also deacylates mischarged glycyl-tRNA(Ala), protecting cells against glycine mischarging by AlaRS. Acts via tRNA-based rather than protein-based catalysis; rejects L-amino acids rather than detecting D-amino acids in the active site. By recycling D-aminoacyl-tRNA to D-amino acids and free tRNA molecules, this enzyme counteracts the toxicity associated with the formation of D-aminoacyl-tRNA entities in vivo and helps enforce protein L-homochirality. This Yersinia enterocolitica serotype O:8 / biotype 1B (strain NCTC 13174 / 8081) protein is D-aminoacyl-tRNA deacylase.